The chain runs to 159 residues: Serine-protein kinase RsbW (159 aa).

The protein belongs to the anti-sigma-factor family.

It carries out the reaction L-seryl-[protein] + ATP = O-phospho-L-seryl-[protein] + ADP + H(+). It catalyses the reaction L-threonyl-[protein] + ATP = O-phospho-L-threonyl-[protein] + ADP + H(+). In terms of biological role, negative regulator of sigma-B activity. Phosphorylates and inactivates its specific antagonist protein, RsbV. Upon phosphorylation of RsbV, RsbW is released and binds to sigma-B, thereby blocking its ability to form an RNA polymerase holoenzyme (E-sigma-B). In Staphylococcus aureus, this protein is Serine-protein kinase RsbW.